Reading from the N-terminus, the 344-residue chain is 1-acyl-sn-glycerol-3-phosphate acyltransferase BAT2, chloroplastic (344 aa).

The transit peptide at 1 to 49 (MDVASAPGVSSHPPYYSKPICSSQSSLIRIPINKGCCFARSSNLITSLH) directs the protein to the chloroplast. The helical transmembrane segment at 113–133 (GICFCLVAGVSAIVLIVLMIT) threads the bilayer. Positions 188–193 (HQSFLD) match the HXXXXD motif motif. Residues 210 to 230 (TGIFVIPVIGWAMSMMGVVPL) traverse the membrane as a helical segment.

The protein belongs to the 1-acyl-sn-glycerol-3-phosphate acyltransferase family. As to expression, widely expressed.

The protein localises to the plastid. It localises to the chloroplast membrane. It carries out the reaction a fatty acyl-[ACP] + a 1-acyl-sn-glycero-3-phosphate = a 1,2-diacyl-sn-glycero-3-phosphate + holo-[ACP]. The enzyme catalyses a 1-acyl-sn-glycero-3-phosphate + an acyl-CoA = a 1,2-diacyl-sn-glycero-3-phosphate + CoA. It participates in phospholipid metabolism; CDP-diacylglycerol biosynthesis; CDP-diacylglycerol from sn-glycerol 3-phosphate: step 2/3. Functionally, plastidial enzyme of the prokaryotic glycerol-3-phosphate pathway that converts lysophosphatidic acid (LPA) into phosphatidic acid by incorporating an acyl moiety at position sn-2. Utilizes palmitoyl-ACP (16:0-ACP) to produce phosphatidic acid containing a saturated group at position sn-2, which is characteristic of lipids synthesized by the prokaryotic pathway. In vitro, can use 16:0-CoA as acyl donor. This Brassica napus (Rape) protein is 1-acyl-sn-glycerol-3-phosphate acyltransferase BAT2, chloroplastic.